Consider the following 256-residue polypeptide: UPF0246 protein Sde_3824 (256 aa).

Belongs to the UPF0246 family.

In Saccharophagus degradans (strain 2-40 / ATCC 43961 / DSM 17024), this protein is UPF0246 protein Sde_3824.